A 447-amino-acid polypeptide reads, in one-letter code: Cysteine--tRNA ligase (447 aa).

Residue Cys28 coordinates Zn(2+). The short motif at 30-40 (PTVYNYIHIGN) is the 'HIGH' region element. Positions 211, 236, and 240 each coordinate Zn(2+). Positions 268–272 (KMSKS) match the 'KMSKS' region motif. Lys271 lines the ATP pocket.

The protein belongs to the class-I aminoacyl-tRNA synthetase family. Monomer. Zn(2+) serves as cofactor.

Its subcellular location is the cytoplasm. The enzyme catalyses tRNA(Cys) + L-cysteine + ATP = L-cysteinyl-tRNA(Cys) + AMP + diphosphate. This chain is Cysteine--tRNA ligase, found in Streptococcus pyogenes serotype M6 (strain ATCC BAA-946 / MGAS10394).